The sequence spans 593 residues: Polyphenol oxidase, chloroplastic (593 aa).

The span at M1–T13 shows a compositional bias: low complexity. Positions M1–L34 are disordered. A chloroplast-targeting transit peptide spans M1–A89. A compositionally biased stretch (polar residues) spans P24–L34. 2 disulfide bridges follow: C100/C115 and C114/C176. H175, H196, H205, H327, H331, and H361 together coordinate Cu cation. The segment at residues C179–H196 is a cross-link (2'-(S-cysteinyl)-histidine (Cys-His)).

The protein belongs to the tyrosinase family. The cofactor is Cu(2+).

The protein resides in the plastid. It is found in the chloroplast thylakoid lumen. The catalysed reaction is 2 catechol + O2 = 2 1,2-benzoquinone + 2 H2O. In terms of biological role, catalyzes the oxidation of mono- and o-diphenols to o-diquinones. This is Polyphenol oxidase, chloroplastic from Malus domestica (Apple).